The primary structure comprises 320 residues: Cytochrome f (320 aa).

A signal peptide spans 1-35 (MQNRNTFSWVKEQMTRFISVSIMIYVITRTSISNA). Residues Tyr36, Cys56, Cys59, and His60 each contribute to the heme site. A helical membrane pass occupies residues 286-306 (VQGLLFFLASVILAQIFLVLK).

It belongs to the cytochrome f family. The 4 large subunits of the cytochrome b6-f complex are cytochrome b6, subunit IV (17 kDa polypeptide, petD), cytochrome f and the Rieske protein, while the 4 small subunits are PetG, PetL, PetM and PetN. The complex functions as a dimer. Heme is required as a cofactor.

The protein resides in the plastid. It is found in the chloroplast thylakoid membrane. Functionally, component of the cytochrome b6-f complex, which mediates electron transfer between photosystem II (PSII) and photosystem I (PSI), cyclic electron flow around PSI, and state transitions. In Drimys granadensis, this protein is Cytochrome f.